A 23-amino-acid polypeptide reads, in one-letter code: HLLQFNKMIKFETRKNAIPFYAF.

As to quaternary structure, heterodimer of an acidic subunit and a basic chain. The acidic subunit is non-toxic, without enzymatic activity and comprises 3 peptides that are cross-linked by 7 disulfide bridges. The basic subunit is toxic, has phospholipase A2 activity and is composed of a single chain. Ca(2+) is required as a cofactor. In terms of processing, contains 7 disulfide bonds. Expressed by the venom gland.

It is found in the secreted. It catalyses the reaction a 1,2-diacyl-sn-glycero-3-phosphocholine + H2O = a 1-acyl-sn-glycero-3-phosphocholine + a fatty acid + H(+). In terms of biological role, snake venom phospholipase A2 (PLA2) that shows presynaptic neurotoxicity. PLA2 catalyzes the calcium-dependent hydrolysis of the 2-acyl groups in 3-sn-phosphoglycerides. This chain is Basic phospholipase A2 CB1, found in Crotalus basiliscus (Mexican west-coast rattlesnake).